Consider the following 62-residue polypeptide: Protein DsrB (62 aa).

Belongs to the DsrB family.

The polypeptide is Protein DsrB (Shigella flexneri serotype 5b (strain 8401)).